The following is a 324-amino-acid chain: Ribosomal RNA small subunit methyltransferase H (324 aa).

S-adenosyl-L-methionine-binding positions include 41–43 (GGH), Asp-60, Tyr-87, Asp-111, and Gln-118.

This sequence belongs to the methyltransferase superfamily. RsmH family.

It localises to the cytoplasm. The enzyme catalyses cytidine(1402) in 16S rRNA + S-adenosyl-L-methionine = N(4)-methylcytidine(1402) in 16S rRNA + S-adenosyl-L-homocysteine + H(+). Functionally, specifically methylates the N4 position of cytidine in position 1402 (C1402) of 16S rRNA. This is Ribosomal RNA small subunit methyltransferase H from Nocardia farcinica (strain IFM 10152).